The primary structure comprises 248 residues: MSEAAKSTIDQSEVDRFSAMAAEWWSPTGKFKPLHKFNPVRLAYIRDHACENFGRDPKSARPLEGLRVLDIGCGGGLLSEPVARMGASVVGADPSEKNIGIASTHAKASGAPVDYRAVTAEQLAEAGETFDIVLNMEVVEHVADVEFFLTTCAKMVRPGGLMYVATINRTMKAAALAIFAAENVLRWLPRGTHQYEKLVRPEEIEKPLAADGLDIIARTGVFYSPLQDRWNLSKDMDVNYMLLAKRAG.

S-adenosyl-L-methionine-binding residues include arginine 41, glycine 72, aspartate 93, and methionine 136.

Belongs to the methyltransferase superfamily. UbiG/COQ3 family.

The catalysed reaction is a 3-demethylubiquinol + S-adenosyl-L-methionine = a ubiquinol + S-adenosyl-L-homocysteine + H(+). It catalyses the reaction a 3-(all-trans-polyprenyl)benzene-1,2-diol + S-adenosyl-L-methionine = a 2-methoxy-6-(all-trans-polyprenyl)phenol + S-adenosyl-L-homocysteine + H(+). The protein operates within cofactor biosynthesis; ubiquinone biosynthesis. Its function is as follows. O-methyltransferase that catalyzes the 2 O-methylation steps in the ubiquinone biosynthetic pathway. This chain is Ubiquinone biosynthesis O-methyltransferase, found in Rhizobium rhizogenes (strain K84 / ATCC BAA-868) (Agrobacterium radiobacter).